Here is a 638-residue protein sequence, read N- to C-terminus: 1-deoxy-D-xylulose-5-phosphate synthase (638 aa).

Residues His77 and 118–120 contribute to the thiamine diphosphate site; that span reads AHA. Asp149 lines the Mg(2+) pocket. Thiamine diphosphate is bound by residues 150–151, Asn178, Tyr287, and Glu369; that span reads GS. Mg(2+) is bound at residue Asn178.

It belongs to the transketolase family. DXPS subfamily. Homodimer. Mg(2+) is required as a cofactor. Requires thiamine diphosphate as cofactor.

It catalyses the reaction D-glyceraldehyde 3-phosphate + pyruvate + H(+) = 1-deoxy-D-xylulose 5-phosphate + CO2. The protein operates within metabolic intermediate biosynthesis; 1-deoxy-D-xylulose 5-phosphate biosynthesis; 1-deoxy-D-xylulose 5-phosphate from D-glyceraldehyde 3-phosphate and pyruvate: step 1/1. Functionally, catalyzes the acyloin condensation reaction between C atoms 2 and 3 of pyruvate and glyceraldehyde 3-phosphate to yield 1-deoxy-D-xylulose-5-phosphate (DXP). The sequence is that of 1-deoxy-D-xylulose-5-phosphate synthase from Phenylobacterium zucineum (strain HLK1).